A 163-amino-acid polypeptide reads, in one-letter code: 2-C-methyl-D-erythritol 2,4-cyclodiphosphate synthase (163 aa).

Residues D15 and H17 each coordinate a divalent metal cation. Residues 15 to 17 (DFH) and 41 to 42 (HS) contribute to the 4-CDP-2-C-methyl-D-erythritol 2-phosphate site. An a divalent metal cation-binding site is contributed by H49. Residues 63–65 (DIG) and 139–142 (TTNE) each bind 4-CDP-2-C-methyl-D-erythritol 2-phosphate.

The protein belongs to the IspF family. In terms of assembly, homotrimer. Requires a divalent metal cation as cofactor.

The enzyme catalyses 4-CDP-2-C-methyl-D-erythritol 2-phosphate = 2-C-methyl-D-erythritol 2,4-cyclic diphosphate + CMP. It participates in isoprenoid biosynthesis; isopentenyl diphosphate biosynthesis via DXP pathway; isopentenyl diphosphate from 1-deoxy-D-xylulose 5-phosphate: step 4/6. In terms of biological role, involved in the biosynthesis of isopentenyl diphosphate (IPP) and dimethylallyl diphosphate (DMAPP), two major building blocks of isoprenoid compounds. Catalyzes the conversion of 4-diphosphocytidyl-2-C-methyl-D-erythritol 2-phosphate (CDP-ME2P) to 2-C-methyl-D-erythritol 2,4-cyclodiphosphate (ME-CPP) with a corresponding release of cytidine 5-monophosphate (CMP). In Gloeobacter violaceus (strain ATCC 29082 / PCC 7421), this protein is 2-C-methyl-D-erythritol 2,4-cyclodiphosphate synthase.